The sequence spans 228 residues: Probable ribosomal RNA small subunit methyltransferase A (228 aa).

Residues histidine 9, leucine 11, glycine 34, glutamate 55, aspartate 78, and asparagine 93 each contribute to the S-adenosyl-L-methionine site.

It belongs to the class I-like SAM-binding methyltransferase superfamily. rRNA adenine N(6)-methyltransferase family. RsmA subfamily.

The protein localises to the cytoplasm. Its function is as follows. Specifically dimethylates two adjacent adenosines in the loop of a conserved hairpin near the 3'-end of 16S rRNA in the 30S particle. May play a critical role in biogenesis of 30S subunits. The protein is Probable ribosomal RNA small subunit methyltransferase A of Pyrobaculum aerophilum (strain ATCC 51768 / DSM 7523 / JCM 9630 / CIP 104966 / NBRC 100827 / IM2).